We begin with the raw amino-acid sequence, 787 residues long: Protein translocase subunit SecA (787 aa).

ATP contacts are provided by residues Q85, 103 to 107 (GEGKT), and D492.

The protein belongs to the SecA family. Monomer and homodimer. Part of the essential Sec protein translocation apparatus which comprises SecA, SecYEG and auxiliary proteins SecDF. Other proteins may also be involved.

The protein resides in the cell membrane. It is found in the cytoplasm. The enzyme catalyses ATP + H2O + cellular proteinSide 1 = ADP + phosphate + cellular proteinSide 2.. Functionally, part of the Sec protein translocase complex. Interacts with the SecYEG preprotein conducting channel. Has a central role in coupling the hydrolysis of ATP to the transfer of proteins into and across the cell membrane, serving as an ATP-driven molecular motor driving the stepwise translocation of polypeptide chains across the membrane. The polypeptide is Protein translocase subunit SecA (Latilactobacillus sakei subsp. sakei (strain 23K) (Lactobacillus sakei subsp. sakei)).